The following is a 427-amino-acid chain: Phosphatidylglycerol--prolipoprotein diacylglyceryl transferase (427 aa).

4 helical membrane passes run 21-41 (VPIR…LLIG), 53-73 (GVIY…GRLY), 96-116 (IWDG…GAWI), and 122-142 (GIPL…AQAI). Arginine 144 contacts a 1,2-diacyl-sn-glycero-3-phospho-(1'-sn-glycerol). The next 2 membrane-spanning stretches (helical) occupy residues 189–209 (VALV…LIFV) and 256–276 (INSF…MAAP). Positions 280–427 (EDPESLRGNQ…ARLRERLSGR (148 aa)) are disordered. Low complexity predominate over residues 299-330 (EPATVAATTEAATEGVAAPADGAEAAGADATA). Residues 332-346 (RPEESAEPDVEKPES) are compositionally biased toward basic and acidic residues. Over residues 347–404 (EETEAAEEASEPEAEEPEAPEAEEPEEPETEEPEADSGEEPEEESGEAPEQLVAEEPE) the composition is skewed to acidic residues. Residues 411–427 (ETKRRWGARLRERLSGR) are compositionally biased toward basic and acidic residues.

The protein belongs to the Lgt family.

The protein localises to the cell membrane. The enzyme catalyses L-cysteinyl-[prolipoprotein] + a 1,2-diacyl-sn-glycero-3-phospho-(1'-sn-glycerol) = an S-1,2-diacyl-sn-glyceryl-L-cysteinyl-[prolipoprotein] + sn-glycerol 1-phosphate + H(+). It functions in the pathway protein modification; lipoprotein biosynthesis (diacylglyceryl transfer). Functionally, catalyzes the transfer of the diacylglyceryl group from phosphatidylglycerol to the sulfhydryl group of the N-terminal cysteine of a prolipoprotein, the first step in the formation of mature lipoproteins. The protein is Phosphatidylglycerol--prolipoprotein diacylglyceryl transferase of Mycolicibacterium paratuberculosis (strain ATCC BAA-968 / K-10) (Mycobacterium paratuberculosis).